A 493-amino-acid polypeptide reads, in one-letter code: MQWIRGGSGMLITGDSIVSAEAVWDHVTMANRGVAFKAGDVIKVLDASNKDWWWGQIDDEEGWFPASFVRLWVNQEDGVEEGPSDVQNGHLDPNSDCLCLGRPLQNRDQMRANVINEIMSTERHYIKHLKDICEGYLKQCRKRRDMFSDEQLKVIFGNIEDIYRFQMGFVRDLEKQYNNDDPHLSEIGPCFLEHQDGFWIYSEYCNNHLDACMELSKLMKDSRYQHFFEACRLLQQMIDIAIDGFLLTPVQKICKYPLQLAELLKYTAQDHSDYRYVAAALAVMRNVTQQINERKRRLENIDKIAQWQASVLDWEGDDILDRSSELIYTGEMAWIYQPYGRNQQRVFFLFDHQMVLCKKDLIRRDILYYKGRIDMDKYEVIDIEDGRDDDFNVSMKNAFKLHNKETEEVHLFFAKKLEEKIRWLRAFREERKMVQEDEKIGFEISENQKRQAAMTVRKASKQKGRVGEEENQSLELKRACEVLQRLWSPGKKS.

In terms of domain architecture, SH3 spans 15-74 (DSIVSAEAVWDHVTMANRGVAFKAGDVIKVLDASNKDWWWGQIDDEEGWFPASFVRLWVN). Residues 107–117 (RDQMRANVINE) form an interaction with GPHN region. In terms of domain architecture, DH spans 110-294 (MRANVINEIM…RNVTQQINER (185 aa)). In terms of domain architecture, PH spans 325 to 432 (ELIYTGEMAW…WLRAFREERK (108 aa)). The disordered stretch occupies residues 453–473 (AMTVRKASKQKGRVGEEENQS).

In terms of assembly, interacts with GPHN. In terms of tissue distribution, detected in brain, throughout the gray matter. Detected at low levels in heart and skeletal muscle.

The protein resides in the cytoplasm. It is found in the postsynaptic density. In terms of biological role, acts as a guanine nucleotide exchange factor (GEF) for CDC42. Promotes formation of GPHN clusters. The polypeptide is Rho guanine nucleotide exchange factor 9 (Arhgef9) (Rattus norvegicus (Rat)).